A 1370-amino-acid chain; its full sequence is Major capsid protein (1370 aa).

This sequence belongs to the herpesviridae major capsid protein family. In terms of assembly, homomultimer. Makes the hexons and eleven out of twelve pentons. Interacts with triplex proteins 1/TRX1 and 2/TRX2; adjacent capsomers are linked together in groups of three by triplexes, heterotrimeric complexes composed of one molecule of TRX1 and two molecules of TRX2. Interacts with scaffold protein; this interaction allows efficient MCP transport to the host nucleus. Interacts with capsid vertex component 2/CVC2. Interacts with the small capsomere-interacting protein/SCP.

Its subcellular location is the virion. The protein resides in the host nucleus. Its function is as follows. Self-assembles to form an icosahedral capsid with a T=16 symmetry, about 200 nm in diameter, and consisting of 150 hexons and 12 pentons (total of 162 capsomers). Hexons form the edges and faces of the capsid and are each composed of six MCP molecules. In contrast, one penton is found at each of the 12 vertices. Eleven of the pentons are MCP pentamers, while the last vertex is occupied by the portal complex. The capsid is surrounded by a layer of proteinaceous material designated the tegument which, in turn, is enclosed in an envelope of host cell-derived lipids containing virus-encoded glycoproteins. This chain is Major capsid protein, found in Human cytomegalovirus (strain AD169) (HHV-5).